A 400-amino-acid polypeptide reads, in one-letter code: Chalcone synthase 7 (400 aa).

Residue cysteine 168 is part of the active site.

The protein belongs to the thiolase-like superfamily. Chalcone/stilbene synthases family.

It carries out the reaction (E)-4-coumaroyl-CoA + 3 malonyl-CoA + 3 H(+) = 2',4,4',6'-tetrahydroxychalcone + 3 CO2 + 4 CoA. It participates in secondary metabolite biosynthesis; flavonoid biosynthesis. Functionally, the primary product of this enzyme is 4,2',4',6'-tetrahydroxychalcone (also termed naringenin-chalcone or chalcone) which can under specific conditions spontaneously isomerize into naringenin. The chain is Chalcone synthase 7 (CHS7) from Sorghum bicolor (Sorghum).